A 257-amino-acid chain; its full sequence is Imidazole glycerol phosphate synthase subunit HisF (257 aa).

Residues Asp-11 and Asp-130 contribute to the active site.

This sequence belongs to the HisA/HisF family. In terms of assembly, heterodimer of HisH and HisF.

The protein resides in the cytoplasm. It catalyses the reaction 5-[(5-phospho-1-deoxy-D-ribulos-1-ylimino)methylamino]-1-(5-phospho-beta-D-ribosyl)imidazole-4-carboxamide + L-glutamine = D-erythro-1-(imidazol-4-yl)glycerol 3-phosphate + 5-amino-1-(5-phospho-beta-D-ribosyl)imidazole-4-carboxamide + L-glutamate + H(+). It participates in amino-acid biosynthesis; L-histidine biosynthesis; L-histidine from 5-phospho-alpha-D-ribose 1-diphosphate: step 5/9. Functionally, IGPS catalyzes the conversion of PRFAR and glutamine to IGP, AICAR and glutamate. The HisF subunit catalyzes the cyclization activity that produces IGP and AICAR from PRFAR using the ammonia provided by the HisH subunit. In Shewanella piezotolerans (strain WP3 / JCM 13877), this protein is Imidazole glycerol phosphate synthase subunit HisF.